Consider the following 256-residue polypeptide: Major prion protein (256 aa).

The first 24 residues, 1–24 (MVKSHIGSWILVLFVAMWSDVGLC), serve as a signal peptide directing secretion. Residues 25–233 (KKRPKPGGGW…ESQAYYQRGA (209 aa)) are interaction with GRB2, ERI3 and SYN1. Positions 28–110 (PKPGGGWNTG…QWNKPSKPKT (83 aa)) are disordered. A run of 5 repeats spans residues 54–62 (PQGGGGWGQ), 63–70 (PHGGGWGQ), 71–78 (PHGGGWGQ), 79–86 (PHGGGWGQ), and 87–95 (PHGGGGWGQ). The segment at 54–95 (PQGGGGWGQPHGGGWGQPHGGGWGQPHGGGWGQPHGGGGWGQ) is 5 X 8 AA tandem repeats of P-H-G-G-G-W-G-Q. Positions 55-97 (QGGGGWGQPHGGGWGQPHGGGWGQPHGGGWGQPHGGGGWGQGG) are enriched in gly residues. Residues His64, Gly65, Gly66, His72, Gly73, Gly74, His80, Gly81, Gly82, His88, Gly90, and Gly91 each coordinate Cu(2+). Cys182 and Cys217 form a disulfide bridge. N-linked (GlcNAc...) asparagine glycosylation is found at Asn184 and Asn200. Ala233 carries the GPI-anchor amidated alanine lipid modification. Positions 234–256 (SVILFSSPPVILLISFLIFLIVG) are cleaved as a propeptide — removed in mature form.

The protein belongs to the prion family. As to quaternary structure, monomer and homodimer. Has a tendency to aggregate into amyloid fibrils containing a cross-beta spine, formed by a steric zipper of superposed beta-strands. Soluble oligomers may represent an intermediate stage on the path to fibril formation. Copper binding may promote oligomerization. Interacts with GRB2, APP, ERI3/PRNPIP and SYN1. Mislocalized cytosolically exposed PrP interacts with MGRN1; this interaction alters MGRN1 subcellular location and causes lysosomal enlargement. Interacts with KIAA1191.

The protein resides in the cell membrane. It is found in the golgi apparatus. Functionally, its primary physiological function is unclear. Has cytoprotective activity against internal or environmental stresses. May play a role in neuronal development and synaptic plasticity. May be required for neuronal myelin sheath maintenance. May play a role in iron uptake and iron homeostasis. Soluble oligomers are toxic to cultured neuroblastoma cells and induce apoptosis (in vitro). Association with GPC1 (via its heparan sulfate chains) targets PRNP to lipid rafts. Also provides Cu(2+) or Zn(2+) for the ascorbate-mediated GPC1 deaminase degradation of its heparan sulfate side chains. The protein is Major prion protein (PRNP) of Odocoileus hemionus (Mule deer).